The primary structure comprises 147 residues: SsrA-binding protein (147 aa).

Residues 119 to 147 (AKGKKQHDKRESEKQKEWERDKQRLMRPK) form a disordered region. Over residues 126 to 147 (DKRESEKQKEWERDKQRLMRPK) the composition is skewed to basic and acidic residues.

The protein belongs to the SmpB family.

The protein localises to the cytoplasm. Required for rescue of stalled ribosomes mediated by trans-translation. Binds to transfer-messenger RNA (tmRNA), required for stable association of tmRNA with ribosomes. tmRNA and SmpB together mimic tRNA shape, replacing the anticodon stem-loop with SmpB. tmRNA is encoded by the ssrA gene; the 2 termini fold to resemble tRNA(Ala) and it encodes a 'tag peptide', a short internal open reading frame. During trans-translation Ala-aminoacylated tmRNA acts like a tRNA, entering the A-site of stalled ribosomes, displacing the stalled mRNA. The ribosome then switches to translate the ORF on the tmRNA; the nascent peptide is terminated with the 'tag peptide' encoded by the tmRNA and targeted for degradation. The ribosome is freed to recommence translation, which seems to be the essential function of trans-translation. The sequence is that of SsrA-binding protein from Nitrosospira multiformis (strain ATCC 25196 / NCIMB 11849 / C 71).